A 234-amino-acid chain; its full sequence is ATP-dependent dethiobiotin synthetase BioD (234 aa).

Residue 12 to 17 (DVGKTF) participates in ATP binding. Thr16 provides a ligand contact to Mg(2+). Residue Lys37 is part of the active site. Thr41 lines the substrate pocket. ATP-binding positions include Asp54 and 115–118 (EGAG). Mg(2+) is bound by residues Asp54 and Glu115.

Belongs to the dethiobiotin synthetase family. Homodimer. It depends on Mg(2+) as a cofactor.

The protein localises to the cytoplasm. It catalyses the reaction (7R,8S)-7,8-diammoniononanoate + CO2 + ATP = (4R,5S)-dethiobiotin + ADP + phosphate + 3 H(+). It participates in cofactor biosynthesis; biotin biosynthesis; biotin from 7,8-diaminononanoate: step 1/2. Catalyzes a mechanistically unusual reaction, the ATP-dependent insertion of CO2 between the N7 and N8 nitrogen atoms of 7,8-diaminopelargonic acid (DAPA, also called 7,8-diammoniononanoate) to form a ureido ring. In Lysinibacillus sphaericus (Bacillus sphaericus), this protein is ATP-dependent dethiobiotin synthetase BioD.